Consider the following 39-residue polypeptide: Cytochrome b6-f complex subunit 5 (39 aa).

Residues 5–25 (LLSGIVLGLVPVTILGLFVTA) traverse the membrane as a helical segment.

It belongs to the PetG family. The 4 large subunits of the cytochrome b6-f complex are cytochrome b6, subunit IV (17 kDa polypeptide, PetD), cytochrome f and the Rieske protein, while the 4 small subunits are PetG, PetL, PetM and PetN. The complex functions as a dimer.

It localises to the plastid. Its subcellular location is the chloroplast thylakoid membrane. Its function is as follows. Component of the cytochrome b6-f complex, which mediates electron transfer between photosystem II (PSII) and photosystem I (PSI), cyclic electron flow around PSI, and state transitions. PetG is required for either the stability or assembly of the cytochrome b6-f complex. The protein is Cytochrome b6-f complex subunit 5 of Pleurastrum terricola (Filamentous green alga).